A 185-amino-acid polypeptide reads, in one-letter code: Elongation factor P (185 aa).

It belongs to the elongation factor P family.

It is found in the cytoplasm. Its pathway is protein biosynthesis; polypeptide chain elongation. Its function is as follows. Involved in peptide bond synthesis. Stimulates efficient translation and peptide-bond synthesis on native or reconstituted 70S ribosomes in vitro. Probably functions indirectly by altering the affinity of the ribosome for aminoacyl-tRNA, thus increasing their reactivity as acceptors for peptidyl transferase. The protein is Elongation factor P of Nitrosomonas eutropha (strain DSM 101675 / C91 / Nm57).